The chain runs to 462 residues: Glycine--tRNA ligase (462 aa).

Substrate is bound by residues Arg99 and Glu174. ATP-binding positions include 206–208 (RNE), 216–221 (FRTREF), 290–291 (EL), and 334–337 (GADR). Substrate is bound at residue 221–225 (FEQME). 330-334 (EPSLG) provides a ligand contact to substrate.

The protein belongs to the class-II aminoacyl-tRNA synthetase family. Homodimer.

It is found in the cytoplasm. It catalyses the reaction tRNA(Gly) + glycine + ATP = glycyl-tRNA(Gly) + AMP + diphosphate. Catalyzes the attachment of glycine to tRNA(Gly). The sequence is that of Glycine--tRNA ligase from Macrococcus caseolyticus (strain JCSC5402) (Macrococcoides caseolyticum).